The following is a 536-amino-acid chain: L-ornithine N(5)-monooxygenase SIDA (536 aa).

The segment at methionine 1–alanine 25 is disordered. Residues glutamate 115–histidine 123 and glutamine 134 contribute to the FAD site. Lysine 139 contacts L-ornithine. Valine 200 is a binding site for FAD. Arginine 310 is a binding site for NADP(+). L-ornithine-binding positions include asparagine 324–phenylalanine 327 and asparagine 354. An FAD-binding site is contributed by threonine 515–leucine 517. Residue serine 518 coordinates L-ornithine.

Belongs to the lysine N(6)-hydroxylase/L-ornithine N(5)-oxygenase family. Homotetramer. The cofactor is FAD.

It carries out the reaction L-ornithine + NADH + O2 = N(5)-hydroxy-L-ornithine + NAD(+) + H2O. The enzyme catalyses L-ornithine + NADPH + O2 = N(5)-hydroxy-L-ornithine + NADP(+) + H2O. Its pathway is siderophore biosynthesis. L-ornithine N(5)-monooxygenase; part of the gene cluster that mediates the biosynthesis of at least 11 siderophores, including beauverichelin A, dimerumic acid (DA), Na-dimethyl coprogen (NADC), eleutherazine B, ferricrocin (FC), fusarinine A, fusarinine C (FsC), metachelin A, mevalonolactone, rhodotorulic acid (RA) and tenellin. This cocktail of siderophores for iron metabolism is essential for virulence, and more specifically for the fungal virulence in penetrating through the host cuticle. Siderophore synthesis is also involved in conidial germination under iron-deficient conditions. SIDA initiates the biosynthesis of these siderophores with the enzymatic hydroxylation of ornithine. SIDA is indispensable for the production of most siderophores including fusarinine C and ferricrocin but not mevalonolactone and eleutherazine B. However, SIDA mediates the metabolic interplay between synthesis of mevalonolactone and eleutherazine B and other siderophores. This Beauveria bassiana (strain ARSEF 2860) (White muscardine disease fungus) protein is L-ornithine N(5)-monooxygenase SIDA.